Reading from the N-terminus, the 186-residue chain is Cytochrome b6-f complex iron-sulfur subunit (186 aa).

Residues 16 to 38 (LLSFVTGGAIAATTAATLYPVVL) form a helical membrane-spanning segment. A Rieske domain is found at 74-163 (GEPVLTLGLD…ATVSDDKVLI (90 aa)). Residues Cys109, His111, Cys127, and His130 each contribute to the [2Fe-2S] cluster site. An intrachain disulfide couples Cys114 to Cys129.

It belongs to the Rieske iron-sulfur protein family. The 4 large subunits of the cytochrome b6-f complex are cytochrome b6, subunit IV (17 kDa polypeptide, PetD), cytochrome f and the Rieske protein, while the 4 small subunits are PetG, PetL, PetM and PetN. The complex functions as a dimer. The cofactor is [2Fe-2S] cluster.

It is found in the cell inner membrane. The enzyme catalyses 2 oxidized [plastocyanin] + a plastoquinol + 2 H(+)(in) = 2 reduced [plastocyanin] + a plastoquinone + 4 H(+)(out). Functionally, component of the cytochrome b6-f complex, which mediates electron transfer between photosystem II (PSII) and photosystem I (PSI), cyclic electron flow around PSI, and state transitions. The polypeptide is Cytochrome b6-f complex iron-sulfur subunit (Gloeobacter violaceus (strain ATCC 29082 / PCC 7421)).